The following is a 346-amino-acid chain: E3 ubiquitin-protein ligase ARK2C (346 aa).

2 disordered regions span residues 23–76 (PFQR…QHSG) and 267–288 (PHKYKKRRPQDGKGKKDEGEES). The segment at 266–268 (FPH) is ubiquitin binding. The segment covering 275 to 284 (PQDGKGKKDE) has biased composition (basic and acidic residues). Residues C294 and C297 each coordinate Zn(2+). Residues 294 to 335 (CTICLSMLEDGEDVRRLPCMHLFHQLCVDQWLAMSKKCPICR) form an RING-type; atypical zinc finger. The segment at 309-313 (RLPCM) is ubiquitin binding. Zn(2+)-binding residues include H317 and C320.

The protein belongs to the Arkadia family. In terms of assembly, monomer; binding to the ubiquitin-conjugating enzyme E2 does not trigger homodimerization.

It localises to the nucleus. It catalyses the reaction S-ubiquitinyl-[E2 ubiquitin-conjugating enzyme]-L-cysteine + [acceptor protein]-L-lysine = [E2 ubiquitin-conjugating enzyme]-L-cysteine + N(6)-ubiquitinyl-[acceptor protein]-L-lysine.. Its activity is regulated as follows. Binds free ubiquitin non-covalently via its RING-type zinc finger. Ubiquitin-binding leads to enhance the E3 ubiquitin-protein ligase activity by stabilizing the ubiquitin-conjugating enzyme E2 (donor ubiquitin) in the 'closed' conformation and activating ubiquitin transfer. E3 ubiquitin-protein ligase that acts as a regulator of motor axon elongation. Required for efficient motor axon extension in the dorsal forelimb by enhancing the transcriptional responses of the SMAD1/SMAD5/SMAD8 effectors, which are activated downstream of BMP. Acts by mediating ubiquitination and degradation of SMAD inhibitors such as SMAD6, SMAD7, SKI and SNON isoform of SKIL. The protein is E3 ubiquitin-protein ligase ARK2C of Homo sapiens (Human).